The following is a 977-amino-acid chain: Protein bicaudal C homolog 1 (977 aa).

The interval 1-43 (MASQSEPGYLAAAQSDPGSNSERSTDSPVAGSEDDLVAAAPLL) is disordered. Residues serine 27, serine 32, and serine 45 each carry the phosphoserine modification. KH domains follow at residues 134 to 201 (RVTL…RARI) and 286 to 350 (PVST…RQYL). At lysine 400 the chain carries N6-acetyllysine. Over residues 590–621 (SLGEKVLSSNHGDPSMQTAGPEQASPKSNSVE) the composition is skewed to polar residues. Disordered regions lie at residues 590–622 (SLGE…SVEG), 667–702 (GTKN…GSER), and 794–848 (EGSS…KSRE). Serine 614 and serine 681 each carry phosphoserine. Over residues 692-702 (LADKKAPGSER) the composition is skewed to basic and acidic residues. Residues 794–803 (EGSSLSLSRS) are compositionally biased toward low complexity. The SAM domain occupies 875-938 (FKGSDLPELF…LLAISELSKN (64 aa)).

The protein belongs to the BicC family. Interacts (via KH domains) with ANKS6 (via SAM domain) in an RNA-dependent manner. Interacts with ANKS3. In terms of tissue distribution, in the adult, predominantly expressed in heart and kidney. In 8 week old mice, expressed in growing primary oocytes and in the stromal cells of the theca.

It is found in the cytoplasm. Functionally, putative RNA-binding protein. May be involved in regulating gene expression during embryonic development. The chain is Protein bicaudal C homolog 1 (Bicc1) from Mus musculus (Mouse).